The following is a 92-amino-acid chain: Kappa-scoloptoxin(15)-Ssd2a (92 aa).

The N-terminal stretch at 1-20 (MKMVYLGLFLIITSCVISSG) is a signal peptide.

Post-translationally, contains 3 disulfide bonds. In terms of tissue distribution, expressed by the venom gland.

The protein localises to the secreted. Inhibits voltage-gated potassium channels (Kv) (IC(50)=about 10 nM), when tested on DRG neurons. The sequence is that of Kappa-scoloptoxin(15)-Ssd2a from Scolopendra dehaani (Thai centipede).